The chain runs to 72 residues: Conotoxin VnMKLT2-011 (72 aa).

The signal sequence occupies residues 1–23 (MMKLTCVLIIAVLFLTACQLTTA). Positions 24–42 (ETRDEYRAVRSSDEVRNSR) are excised as a propeptide. 3 disulfides stabilise this stretch: C44–C57, C51–C62, and C56–C71.

Belongs to the conotoxin O1 superfamily. In terms of tissue distribution, expressed by the venom duct.

The protein localises to the secreted. In Conus ventricosus (Mediterranean cone), this protein is Conotoxin VnMKLT2-011.